The following is a 429-amino-acid chain: Divergent protein kinase domain 2A (429 aa).

Residues 1 to 34 (MLRLASLKFGRLFRYAKVLFAASLLVVMLLNTHS) form the signal peptide.

It belongs to the DIPK family.

It is found in the cytoplasmic vesicle. The protein localises to the COPI-coated vesicle. Its subcellular location is the golgi apparatus. The protein resides in the secreted. Its function is as follows. May play a role in cardiomyocyte proliferation through paracrine signaling and activation of the PPI3K-AKT-CDK7 signaling cascade. This Xenopus tropicalis (Western clawed frog) protein is Divergent protein kinase domain 2A (dipk2a).